Here is a 134-residue protein sequence, read N- to C-terminus: 6,7-dimethyl-8-ribityllumazine synthase (134 aa).

Residues F12, 44–46 (VFD), and 68–70 (SVI) contribute to the 5-amino-6-(D-ribitylamino)uracil site. 73 to 74 (DT) is a binding site for (2S)-2-hydroxy-3-oxobutyl phosphate. The Proton donor role is filled by H76. Position 101 (L101) interacts with 5-amino-6-(D-ribitylamino)uracil. R116 is a binding site for (2S)-2-hydroxy-3-oxobutyl phosphate.

Belongs to the DMRL synthase family.

The enzyme catalyses (2S)-2-hydroxy-3-oxobutyl phosphate + 5-amino-6-(D-ribitylamino)uracil = 6,7-dimethyl-8-(1-D-ribityl)lumazine + phosphate + 2 H2O + H(+). It participates in cofactor biosynthesis; riboflavin biosynthesis; riboflavin from 2-hydroxy-3-oxobutyl phosphate and 5-amino-6-(D-ribitylamino)uracil: step 1/2. Functionally, catalyzes the formation of 6,7-dimethyl-8-ribityllumazine by condensation of 5-amino-6-(D-ribitylamino)uracil with 3,4-dihydroxy-2-butanone 4-phosphate. This is the penultimate step in the biosynthesis of riboflavin. This is 6,7-dimethyl-8-ribityllumazine synthase from Methanosarcina barkeri (strain Fusaro / DSM 804).